An 80-amino-acid chain; its full sequence is UPF0291 protein LACR_1198 (80 aa).

It belongs to the UPF0291 family.

It is found in the cytoplasm. This is UPF0291 protein LACR_1198 from Lactococcus lactis subsp. cremoris (strain SK11).